A 122-amino-acid chain; its full sequence is Large ribosomal subunit protein uL14 (122 aa).

This sequence belongs to the universal ribosomal protein uL14 family. Part of the 50S ribosomal subunit. Forms a cluster with proteins L3 and L19. In the 70S ribosome, L14 and L19 interact and together make contacts with the 16S rRNA in bridges B5 and B8.

Functionally, binds to 23S rRNA. Forms part of two intersubunit bridges in the 70S ribosome. The sequence is that of Large ribosomal subunit protein uL14 from Pseudomonas paraeruginosa (strain DSM 24068 / PA7) (Pseudomonas aeruginosa (strain PA7)).